Here is a 196-residue protein sequence, read N- to C-terminus: MPIGVPKVPYRSPGDKHPSWVDIYNRLYRERLLFLGQMVESDISNQLIGIMVYLSIENETKDLYLFINSPGGWVIPGIAIYDTMQFVRPDVQTICMGLAASMGSFLLAAGASTKRLAFPHARVMIHQPIGAFYGAQTGEFILDTEELLRLREILTMVYVQRSGKPLWVVSEDMERDTFMSATEAQAHGLVDLVAVG.

Ser101 acts as the Nucleophile in catalysis. His126 is a catalytic residue.

It belongs to the peptidase S14 family. As to quaternary structure, component of the chloroplastic Clp protease core complex.

The protein localises to the plastid. The protein resides in the chloroplast stroma. It catalyses the reaction Hydrolysis of proteins to small peptides in the presence of ATP and magnesium. alpha-casein is the usual test substrate. In the absence of ATP, only oligopeptides shorter than five residues are hydrolyzed (such as succinyl-Leu-Tyr-|-NHMec, and Leu-Tyr-Leu-|-Tyr-Trp, in which cleavage of the -Tyr-|-Leu- and -Tyr-|-Trp bonds also occurs).. Cleaves peptides in various proteins in a process that requires ATP hydrolysis. Has a chymotrypsin-like activity. Plays a major role in the degradation of misfolded proteins. The chain is ATP-dependent Clp protease proteolytic subunit from Citrus sinensis (Sweet orange).